The primary structure comprises 110 residues: DNA-directed RNA polymerase subunit omega (110 aa).

The protein belongs to the RNA polymerase subunit omega family. The RNAP catalytic core consists of 2 alpha, 1 beta, 1 beta' and 1 omega subunit. When a sigma factor is associated with the core the holoenzyme is formed, which can initiate transcription.

The catalysed reaction is RNA(n) + a ribonucleoside 5'-triphosphate = RNA(n+1) + diphosphate. Promotes RNA polymerase assembly. Latches the N- and C-terminal regions of the beta' subunit thereby facilitating its interaction with the beta and alpha subunits. This is DNA-directed RNA polymerase subunit omega from Vesicomyosocius okutanii subsp. Calyptogena okutanii (strain HA).